An 85-amino-acid chain; its full sequence is UPF0291 protein SPCG_1462 (85 aa).

A disordered region spans residues 62-85; the sequence is TPEKLRQVQREKGLHGRSLDDPNS.

Belongs to the UPF0291 family.

The protein localises to the cytoplasm. This chain is UPF0291 protein SPCG_1462, found in Streptococcus pneumoniae (strain CGSP14).